The primary structure comprises 592 residues: Autophagy-related protein 22-1 (592 aa).

Transmembrane regions (helical) follow at residues Tyr31 to Leu51, Thr108 to Ile128, Leu143 to Pro163, and Leu167 to Leu187. N-linked (GlcNAc...) asparagine glycosylation is present at Asn213. 8 consecutive transmembrane segments (helical) span residues Ile271–Val291, Leu301–Leu321, Ile364–Thr384, Ala398–Trp418, Ile433–Pro453, Met468–Phe490, Phe502–Ile524, and Ala534–Val554. A disordered region spans residues Pro572–Glu592.

The protein belongs to the ATG22 family.

The protein localises to the vacuole membrane. Vacuolar effluxer which mediate the efflux of amino acids resulting from autophagic degradation. The release of autophagic amino acids allows the maintenance of protein synthesis and viability during nitrogen starvation. The sequence is that of Autophagy-related protein 22-1 (atg22-1) from Penicillium rubens (strain ATCC 28089 / DSM 1075 / NRRL 1951 / Wisconsin 54-1255) (Penicillium chrysogenum).